Consider the following 426-residue polypeptide: 6-Hydroxy-7-prenyldeoxybrevianamide E synthase notC' (426 aa).

Glu-94 serves as a coordination point for substrate. Dimethylallyl diphosphate-binding residues include Arg-105, Lys-191, and Tyr-193. Tyr-195 is a binding site for substrate. 6 residues coordinate dimethylallyl diphosphate: Lys-267, Tyr-269, Gln-352, Tyr-354, Tyr-418, and Tyr-422.

The protein belongs to the tryptophan dimethylallyltransferase family.

The catalysed reaction is 6-hydroxydeoxybrevianamide E + dimethylallyl diphosphate = notoamide S + diphosphate. Its pathway is alkaloid biosynthesis. Functionally, prenyltransferase; part of the gene cluster that mediates the biosynthesis of notoamide, a fungal indole alkaloid that belongs to a family of natural products containing a characteristic bicyclo[2.2.2]diazaoctane core. The first step of notoamide biosynthesis involves coupling of L-proline and L-tryptophan by the bimodular NRPS notE', to produce cyclo-L-tryptophan-L-proline called brevianamide F. The reverse prenyltransferase notF' then acts as a deoxybrevianamide E synthase and converts brevianamide F to deoxybrevianamide E via reverse prenylation at C-2 of the indole ring leading to the bicyclo[2.2.2]diazaoctane core. Deoxybrevianamide E is further hydroxylated at C-6 of the indole ring, likely catalyzed by the cytochrome P450 monooxygenase notG', to yield 6-hydroxy-deoxybrevianamide E. 6-hydroxy-deoxybrevianamide E is a specific substrate of the prenyltransferase notC' for normal prenylation at C-7 to produce 6-hydroxy-7-prenyl-deoxybrevianamide, also called notoamide S. As the proposed pivotal branching point in notoamide biosynthesis, notoamide S can be diverted to notoamide E through an oxidative pyran ring closure putatively catalyzed by either notH' cytochrome P450 monooxygenase or the notD' FAD-linked oxidoreductase. This step would be followed by an indole 2,3-epoxidation-initiated pinacol-like rearrangement catalyzed by the notB' FAD-dependent monooxygenase leading to the formation of notoamide C and notoamide D. On the other hand notoamide S is converted to notoamide T by notH' (or notD'), a bifunctional oxidase that also functions as the intramolecular Diels-Alderase responsible for generation of (-)-notoamide T. To generate antipodal (+)-notoaminide T, notH (or notD) in Aspergillus strain MF297-2 is expected to catalyze a Diels-Alder reaction leading to the opposite stereochemistry. The remaining oxidoreductase notD' (or notH') likely catalyzes the oxidative pyran ring formation to yield (-)-stephacidin A. The FAD-dependent monooxygenase notI' is highly similar to notB' and is predicted to catalyze a similar conversion from (-)-stephacidin A to (+)-notoamide B via the 2,3-epoxidation of (-)-stephacidin A followed by a pinacol-type rearrangement. Finally, it remains unclear which enzyme could be responsible for the final hydroxylation steps leading to notoamide A and sclerotiamide. The sequence is that of 6-Hydroxy-7-prenyldeoxybrevianamide E synthase notC' from Aspergillus versicolor.